Here is a 679-residue protein sequence, read N- to C-terminus: MEKNFKRTTVTSALPYANGPVHIGHLAGVYVPADIYVRYLRLKKEDVLFIGGSDEHGVPITIRAKKEGITPQDVVDRYHFLIKKSFEEFGISFDVYSRTSSKTHHELASDFFKKLYEKGEFIEKTSEQYYDEEAHQFLADRYITGECPHCHSEGAYGDQCEKCGTSLSPTDLINPKSAISGSKPVMKETKHWYLPLDKHETWLRQWILEEHKEWRPNVYGQCKSWLDMGLQPRAVSRDLDWGIPVPVEGAEGKVLYVWFDAPIGYISNTKELLPDSWETWWKDPETRLVHFIGKDNIVFHCIVFPAMLKAEGSYILPDNVPSNEFLNLEGDKISTSRNWAVWLHEYLEDFPGKQDVLRYVLTANAPETKDNDFTWKDFQARNNNELVAVYGNFVNRAMVLTQKYFEGKVPAAGELTDYDKETLKEFSDVKAEVEKLLNVFKFRDAQKEAMNLARIGNKYLADTEPWKLAKTDMERVGTILNISLQLVANLAIAFEPFLPFSSERLRQMLNMDSFDWAELGRNDLLPAGHQLNKPELLFEKIEDATIEAQVQKLLDTKKANEEANYKAKPIRANIEFDDFMKLDIRVGTVLECQKVPKADKLLQFKIDDGLETRTIVSGIAQHYKPEELVGKQVCFIANLAPRKLKGIVSEGMILSAENNDGSLAVVMPGREVKPGSEVK.

C147, C150, C160, and C163 together coordinate Zn(2+). Positions 332–336 (KISTS) match the 'KMSKS' region motif. T335 contacts ATP. One can recognise a tRNA-binding domain in the interval 578 to 679 (DFMKLDIRVG…REVKPGSEVK (102 aa)).

This sequence belongs to the class-I aminoacyl-tRNA synthetase family. MetG type 1 subfamily. Homodimer. The cofactor is Zn(2+).

It localises to the cytoplasm. The catalysed reaction is tRNA(Met) + L-methionine + ATP = L-methionyl-tRNA(Met) + AMP + diphosphate. Its function is as follows. Is required not only for elongation of protein synthesis but also for the initiation of all mRNA translation through initiator tRNA(fMet) aminoacylation. The chain is Methionine--tRNA ligase from Bacteroides fragilis (strain YCH46).